We begin with the raw amino-acid sequence, 451 residues long: Lipase member H (451 aa).

Residues 1–16 (MLRLCFFISFMCLVKS) form the signal peptide. An N-linked (GlcNAc...) asparagine glycan is attached at Asn-66. Ser-154 (nucleophile) is an active-site residue. The Charge relay system role is filled by Asp-178. An intrachain disulfide couples Cys-233 to Cys-246. Catalysis depends on His-248, which acts as the Charge relay system. 3 disulfides stabilise this stretch: Cys-270–Cys-281, Cys-284–Cys-292, and Cys-427–Cys-446.

Belongs to the AB hydrolase superfamily. Lipase family. Interacts with TTMP/C3orf52. In terms of tissue distribution, expressed in placenta and colon. Weakly expressed in small intestine.

It is found in the secreted. The protein localises to the cell membrane. It catalyses the reaction 1-hexadecanoyl-2-(9Z-octadecenoyl)-sn-glycero-3-phosphate + H2O = 2-(9Z-octadecenoyl)-sn-glycero-3-phosphate + hexadecanoate + H(+). Functionally, hydrolyzes specifically phosphatidic acid (PA) to produce 2-acyl lysophosphatidic acid (LPA; a potent bioactive lipid mediator) and fatty acid. Does not hydrolyze other phospholipids, like phosphatidylserine (PS), phosphatidylcholine (PC) and phosphatidylethanolamine (PE) or triacylglycerol (TG). The sequence is that of Lipase member H (Liph) from Mus musculus (Mouse).